A 283-amino-acid polypeptide reads, in one-letter code: Elongation factor Ts (283 aa).

An involved in Mg(2+) ion dislocation from EF-Tu region spans residues 79–82; that stretch reads TDFV.

It belongs to the EF-Ts family.

Its subcellular location is the cytoplasm. Functionally, associates with the EF-Tu.GDP complex and induces the exchange of GDP to GTP. It remains bound to the aminoacyl-tRNA.EF-Tu.GTP complex up to the GTP hydrolysis stage on the ribosome. In Shewanella oneidensis (strain ATCC 700550 / JCM 31522 / CIP 106686 / LMG 19005 / NCIMB 14063 / MR-1), this protein is Elongation factor Ts.